A 71-amino-acid polypeptide reads, in one-letter code: Small ribosomal subunit protein bS18 (71 aa).

The protein belongs to the bacterial ribosomal protein bS18 family. Part of the 30S ribosomal subunit. Forms a tight heterodimer with protein bS6.

In terms of biological role, binds as a heterodimer with protein bS6 to the central domain of the 16S rRNA, where it helps stabilize the platform of the 30S subunit. This chain is Small ribosomal subunit protein bS18, found in Dichelobacter nodosus (strain VCS1703A).